The sequence spans 247 residues: Cell division protein ZapD (247 aa).

The protein belongs to the ZapD family. Interacts with FtsZ.

Its subcellular location is the cytoplasm. Functionally, cell division factor that enhances FtsZ-ring assembly. Directly interacts with FtsZ and promotes bundling of FtsZ protofilaments, with a reduction in FtsZ GTPase activity. The protein is Cell division protein ZapD of Escherichia fergusonii (strain ATCC 35469 / DSM 13698 / CCUG 18766 / IAM 14443 / JCM 21226 / LMG 7866 / NBRC 102419 / NCTC 12128 / CDC 0568-73).